The chain runs to 161 residues: Large ribosomal subunit protein bL17 (161 aa).

The tract at residues 126 to 161 (TAAKKAPKTRRSRKKATASVAEAPTAEAASEEKAAE) is disordered. Residues 130–141 (KAPKTRRSRKKA) show a composition bias toward basic residues. The segment covering 142–153 (TASVAEAPTAEA) has biased composition (low complexity).

Belongs to the bacterial ribosomal protein bL17 family. As to quaternary structure, part of the 50S ribosomal subunit. Contacts protein L32.

This Parabacteroides distasonis (strain ATCC 8503 / DSM 20701 / CIP 104284 / JCM 5825 / NCTC 11152) protein is Large ribosomal subunit protein bL17.